The sequence spans 638 residues: Signal recognition particle receptor subunit alpha (638 aa).

Disordered regions lie at residues 132–244 (APTT…GKKA) and 283–316 (GTGS…TKGT). 2 stretches are compositionally biased toward basic and acidic residues: residues 137 to 146 (KKFEDSEKAK) and 153 to 165 (IETR…EKAK). At Ser-177 the chain carries Phosphoserine. Residues 204–239 (LSKEELIRRKREEFIQKHGRGMEKSNKSTKSDAPKE) are compositionally biased toward basic and acidic residues. Thr-284 carries the phosphothreonine modification. Ser-296, Ser-297, and Ser-298 each carry phosphoserine. Polar residues predominate over residues 304–314 (AQNSTKPSATK). Positions 419–636 (YVVTFCGVNG…NAKAVVAALM (218 aa)) are NG domain. Residue 425-432 (GVNGVGKS) coordinates GTP. Ser-473 is modified (phosphoserine). 520-524 (DTAGR) serves as a coordination point for GTP. Phosphothreonine is present on Thr-578. 588-591 (TKFD) provides a ligand contact to GTP.

This sequence belongs to the GTP-binding SRP family. Heterodimer with SRPRB. Interacts with the signal recognition particle (SRP) complex subunit SRP54. In terms of assembly, (Microbial infection) May interact with Zika virus strain Mr-766 non-structural protein 4A/NS4A. May interact with Zika virus French Polynesia 10087PF/2013 non-structural protein 4A/NS4A. As to quaternary structure, (Microbial infection) May interact with Dengue virus DENV2 16681 non-structural protein 4A/NS4A.

The protein resides in the endoplasmic reticulum membrane. Functionally, component of the signal recognition particle (SRP) complex receptor (SR). Ensures, in conjunction with the SRP complex, the correct targeting of the nascent secretory proteins to the endoplasmic reticulum membrane system. Forms a guanosine 5'-triphosphate (GTP)-dependent complex with the SRP subunit SRP54. SRP receptor compaction and GTPase rearrangement drive SRP-mediated cotranslational protein translocation into the ER. In Homo sapiens (Human), this protein is Signal recognition particle receptor subunit alpha.